The primary structure comprises 2108 residues: General negative regulator of transcription subunit 1 (2108 aa).

Coiled-coil stretches lie at residues 795-813 and 1021-1046; these read NVTLANLNNKVDELKKSLT and MQQHQQQMLIYQQRQQQQQQRQQQQQ. Residues 1323 to 1352 are disordered; it reads QQQQLQKSRLNQPSQSAQPPGVNVPNPQGG. Polar residues predominate over residues 1329–1339; sequence KSRLNQPSQSA. The segment covering 1340–1352 has biased composition (low complexity); that stretch reads QPPGVNVPNPQGG. Threonine 2102 is modified (phosphothreonine).

This sequence belongs to the CNOT1 family. As to quaternary structure, forms a NOT protein complex that comprises NOT1, NOT2, NOT3, NOT4 and NOT5. Subunit of the 1.0 MDa CCR4-NOT core complex that contains CCR4, CAF1, NOT1, NOT2, NOT3, NOT4, NOT5, CAF40 and CAF130. In the complex interacts with CCR4, POP2, NOT2, NOT4 and NOT5. The core complex probably is part of a less characterized 1.9 MDa CCR4-NOT complex.

Its subcellular location is the cytoplasm. It is found in the nucleus. Its function is as follows. Acts as a component of the CCR4-NOT core complex, which in the nucleus seems to be a general transcription factor, and in the cytoplasm the major mRNA deadenylase involved in mRNA turnover. The NOT protein subcomplex negatively regulates the basal and activated transcription of many genes. Preferentially affects TC-type TATA element-dependent transcription. Could directly or indirectly inhibit component(s) of the general transcription machinery. The chain is General negative regulator of transcription subunit 1 (CDC39) from Saccharomyces cerevisiae (strain ATCC 204508 / S288c) (Baker's yeast).